The following is a 350-amino-acid chain: Protein RecA (350 aa).

An ATP-binding site is contributed by 66–73; it reads GPESSGKT.

The protein belongs to the RecA family.

The protein resides in the cytoplasm. Can catalyze the hydrolysis of ATP in the presence of single-stranded DNA, the ATP-dependent uptake of single-stranded DNA by duplex DNA, and the ATP-dependent hybridization of homologous single-stranded DNAs. It interacts with LexA causing its activation and leading to its autocatalytic cleavage. The sequence is that of Protein RecA from Nocardioides sp. (strain ATCC BAA-499 / JS614).